The chain runs to 598 residues: MHPYRTHDCSALREENAGQVVRLSGWVHSKRDHGGLLFIDLRDHYGVTQIVIPAGTDLLEKAERLRVESVITVTGKVVVRHGSQRNPNLPTGDVEVLADALEVRSSAEVLPFQVAGNENYPEDLRLKYRYIDLRRDKMHQNIMLRSKVITSLRQRMIEQGFTEFQTPILTASSPEGARDFLVPARLHPGKFYALPQAPQQFKQLAMVAGFDRYFQIAPCFRDEASRADRSPGEFYQLDFEMSFVTQEDVFTVLEPVLAGVFNEFTPEGWKITDGAFPRIPYADAMRDYGSDKPDLRNPLIIKDVTDAFRDSGFGLFAKIAASGGQIRAIPAPGAGDRPRGFFDKLNSWARENGAGGLGYIIFGEEGGKGPIVKNLEADRVESIREICGLKAGDAVFFAAGKGDEVAKFSGVVRTKVATELDLIEKNAFRFCWVVDFPMYELNEETGKVDFSHNPFSMPQGGLEALNTQDPLTINAYQYDIVCNGVELSSGAIRNHLPDVMLRAFEIAGYGPEVVEERFGGMLNAFRYGAPPHGGAAPGVDRIVMLLADEPNIREVILFPLNQSGEDLMMEAPAPVEPARLKELHLALDLPKPKPTASK.

An L-aspartate-binding site is contributed by Glu-175. The tract at residues 199-202 (QQFK) is aspartate. The L-aspartate site is built by Arg-221 and His-452. 221 to 223 (RDE) serves as a coordination point for ATP. Residue Glu-486 participates in ATP binding. Arg-493 is a binding site for L-aspartate. 538 to 541 (GVDR) contacts ATP.

It belongs to the class-II aminoacyl-tRNA synthetase family. Type 1 subfamily. In terms of assembly, homodimer.

It is found in the cytoplasm. It catalyses the reaction tRNA(Asx) + L-aspartate + ATP = L-aspartyl-tRNA(Asx) + AMP + diphosphate. Aspartyl-tRNA synthetase with relaxed tRNA specificity since it is able to aspartylate not only its cognate tRNA(Asp) but also tRNA(Asn). Reaction proceeds in two steps: L-aspartate is first activated by ATP to form Asp-AMP and then transferred to the acceptor end of tRNA(Asp/Asn). This chain is Aspartate--tRNA(Asp/Asn) ligase, found in Gluconobacter oxydans (strain 621H) (Gluconobacter suboxydans).